Reading from the N-terminus, the 96-residue chain is Small ribosomal subunit protein bS6 (96 aa).

It belongs to the bacterial ribosomal protein bS6 family.

Its function is as follows. Binds together with bS18 to 16S ribosomal RNA. This Streptococcus gordonii (strain Challis / ATCC 35105 / BCRC 15272 / CH1 / DL1 / V288) protein is Small ribosomal subunit protein bS6.